The primary structure comprises 342 residues: Nicotinate-nucleotide--dimethylbenzimidazole phosphoribosyltransferase (342 aa).

Catalysis depends on Glu311, which acts as the Proton acceptor.

This sequence belongs to the CobT family.

It catalyses the reaction 5,6-dimethylbenzimidazole + nicotinate beta-D-ribonucleotide = alpha-ribazole 5'-phosphate + nicotinate + H(+). It participates in nucleoside biosynthesis; alpha-ribazole biosynthesis; alpha-ribazole from 5,6-dimethylbenzimidazole: step 1/2. Catalyzes the synthesis of alpha-ribazole-5'-phosphate from nicotinate mononucleotide (NAMN) and 5,6-dimethylbenzimidazole (DMB). This Photobacterium profundum (strain SS9) protein is Nicotinate-nucleotide--dimethylbenzimidazole phosphoribosyltransferase.